The sequence spans 521 residues: Beta-glucosidase 6 (521 aa).

A signal peptide spans 1–38 (MGRIKSSSGRCSTARLEAVAVLVVVFGVASSSLRGCIA). A beta-D-glucoside contacts are provided by residues Q64, H165, and 210–211 (NE). E211 acts as the Proton donor in catalysis. A disulfide bond links C230 and C238. The N-linked (GlcNAc...) asparagine glycan is linked to N291. Y354 serves as a coordination point for a beta-D-glucoside. N-linked (GlcNAc...) asparagine glycosylation is found at N362 and N372. Residues E427, W477, 484–485 (EW), and F493 contribute to the a beta-D-glucoside site. E427 acts as the Nucleophile in catalysis.

The protein belongs to the glycosyl hydrolase 1 family. Homodimer.

Its subcellular location is the secreted. The catalysed reaction is Hydrolysis of terminal, non-reducing beta-D-glucosyl residues with release of beta-D-glucose.. In terms of biological role, hydrolyzes glycosides, oligosaccharides and hydrophobic glycosides. Possesses gibberellin ester beta-D-glucosidase activity. Can hydrolyze gibberellin A4 beta-D-glucosyl ester in vitro. The chain is Beta-glucosidase 6 from Oryza sativa subsp. japonica (Rice).